The primary structure comprises 134 residues: Small ribosomal subunit protein uS8c (134 aa).

Belongs to the universal ribosomal protein uS8 family. As to quaternary structure, part of the 30S ribosomal subunit.

It localises to the plastid. The protein resides in the chloroplast. One of the primary rRNA binding proteins, it binds directly to 16S rRNA central domain where it helps coordinate assembly of the platform of the 30S subunit. In Lotus japonicus (Lotus corniculatus var. japonicus), this protein is Small ribosomal subunit protein uS8c (rps8).